The following is a 360-amino-acid chain: Flavone O-methyltransferase 1 (360 aa).

127–133 (MNQDKVL) contacts substrate. The segment at 159-177 (AFEYHGTDPRFNRVFNEGM) is substrate binding. S-adenosyl-L-methionine contacts are provided by Gly205, Asp228, Asp248, Met249, and Lys262. The Proton acceptor role is filled by His266.

This sequence belongs to the class I-like SAM-binding methyltransferase superfamily. Cation-independent O-methyltransferase family. COMT subfamily. Homodimer.

Flavone-specific O-methyltransferase with a preference for flavones &gt; flavonols. Active with tricetin, luteolin, quercitin and eriodictyol. Very low activity with phenylpropanoids (5-hydroxyferulic acid and caffeic acid). Catalyzes the sequential O-methylation of tricetin via 3'-O-methyltricetin, 3',5'-O-methyltricetin to 3',4',5'-O-trimethyltricetin. The chain is Flavone O-methyltransferase 1 (OMT1) from Triticum aestivum (Wheat).